Here is a 554-residue protein sequence, read N- to C-terminus: Zinc finger protein 426 (554 aa).

One can recognise a KRAB domain in the interval V42–M112. A C2H2-type 1; atypical zinc finger spans residues C146–H174. C2H2-type zinc fingers lie at residues F224–H246, Y280–H302, Y308–H330, Y336–H358, Y364–H386, F392–H414, C420–H442, Y448–H470, Y476–H498, Y504–H526, and Y532–H554.

It is found in the nucleus. Its function is as follows. May be involved in transcriptional regulation. The chain is Zinc finger protein 426 (ZNF426) from Homo sapiens (Human).